Consider the following 156-residue polypeptide: UPF0262 protein Jann_2882 (156 aa).

This sequence belongs to the UPF0262 family.

The chain is UPF0262 protein Jann_2882 from Jannaschia sp. (strain CCS1).